Consider the following 117-residue polypeptide: Large ribosomal subunit protein uL18 (117 aa).

Belongs to the universal ribosomal protein uL18 family. As to quaternary structure, part of the 50S ribosomal subunit; part of the 5S rRNA/L5/L18/L25 subcomplex. Contacts the 5S and 23S rRNAs.

This is one of the proteins that bind and probably mediate the attachment of the 5S RNA into the large ribosomal subunit, where it forms part of the central protuberance. This Pectobacterium atrosepticum (strain SCRI 1043 / ATCC BAA-672) (Erwinia carotovora subsp. atroseptica) protein is Large ribosomal subunit protein uL18.